The following is a 453-amino-acid chain: Serine protease HTRA3 (453 aa).

The first 17 residues, 1–17, serve as a signal peptide directing secretion; it reads MQARALLLAALAALALA. Residues 21 to 84 form the IGFBP N-terminal domain; sequence PAAPCPARCD…ECVRGLCRCR (64 aa). 8 cysteine pairs are disulfide-bonded: Cys25/Cys48, Cys29/Cys50, Cys34/Cys51, Cys39/Cys54, Cys62/Cys76, Cys70/Cys81, Cys83/Cys101, and Cys90/Cys126. Residues 64-128 form the Kazal-like domain; it reads GPLDSPCGES…RQLQKGACPL (65 aa). Positions 175–340 are serine protease; the sequence is GSGFIMSEAG…AIPSDRITRF (166 aa). Catalysis depends on charge relay system residues His191, Asp227, and Ser305. The PDZ domain occupies 359-444; that stretch reads IRMRTITPSL…EVRRGNDDLL (86 aa).

This sequence belongs to the peptidase S1C family. As to quaternary structure, homotrimer. Interacts with TGFB1; the interaction inhibits TGFB-mediated signaling. Interacts with BMP4; the interaction inhibits BMP4-mediated signaling. Interacts with TGFB2 and GDF5. Interacts with MYH9. As to expression, widely expressed, with highest levels in both adult and fetal heart, ovary, uterus placenta, and bladder. In the endometrium, expressed in epithelial glands and the stroma. Also present in leukocytes. Isoform 1 is predominant in heart and skeletal muscle, whereas isoform 2 is predominant in placenta and kidney.

It is found in the secreted. In terms of biological role, serine protease that cleaves beta-casein/CSN2 as well as several extracellular matrix (ECM) proteoglycans such as decorin/DCN, biglycan/BGN and fibronectin/FN1. Inhibits signaling mediated by TGF-beta family proteins possibly indirectly by degradation of these ECM proteoglycans. May act as a tumor suppressor. Negatively regulates, in vitro, trophoblast invasion during placental development and may be involved in the development of the placenta in vivo. May also have a role in ovarian development, granulosa cell differentiation and luteinization. The chain is Serine protease HTRA3 (HTRA3) from Homo sapiens (Human).